Reading from the N-terminus, the 1199-residue chain is DNA-directed RNA polymerase subunit beta (1199 aa).

The interval 1177 to 1199 (EQEEKKAKEAEQETAEKEETKTE) is disordered.

This sequence belongs to the RNA polymerase beta chain family. The RNAP catalytic core consists of 2 alpha, 1 beta, 1 beta' and 1 omega subunit. When a sigma factor is associated with the core the holoenzyme is formed, which can initiate transcription.

The catalysed reaction is RNA(n) + a ribonucleoside 5'-triphosphate = RNA(n+1) + diphosphate. DNA-dependent RNA polymerase catalyzes the transcription of DNA into RNA using the four ribonucleoside triphosphates as substrates. This Ligilactobacillus salivarius (strain UCC118) (Lactobacillus salivarius) protein is DNA-directed RNA polymerase subunit beta.